A 281-amino-acid chain; its full sequence is Non-selective voltage-gated ion channel 2 (281 aa).

ATP-binding residues include Arg11 and Arg19.

Belongs to the eukaryotic mitochondrial porin family.

Its subcellular location is the mitochondrion outer membrane. Functionally, non-selective voltage-gated ion channel that mediates the transport of anions and cations through the mitochondrion outer membrane. The channel adopts an open conformation at low or zero membrane potential and a closed conformation at potentials above 30-40 mV. The open state has a weak anion selectivity whereas the closed state is cation-selective. Does not confer permeability to NADH. Catalyzes the scrambling of phospholipids across the outer mitochondrial membrane; the mechanism is unrelated to channel activity and is capable of translocating both anionic and zwitterionic phospholipids. The polypeptide is Non-selective voltage-gated ion channel 2 (POR2) (Saccharomyces cerevisiae (strain ATCC 204508 / S288c) (Baker's yeast)).